The chain runs to 553 residues: Hydroxylamine reductase (553 aa).

The [2Fe-2S] cluster site is built by Cys-3, Cys-6, Cys-18, and Cys-25. His-252, Glu-276, Cys-320, Cys-408, Cys-436, Cys-461, Glu-495, and Lys-497 together coordinate hybrid [4Fe-2O-2S] cluster. Cys-408 carries the cysteine persulfide modification.

The protein belongs to the HCP family. [2Fe-2S] cluster serves as cofactor. It depends on hybrid [4Fe-2O-2S] cluster as a cofactor.

It is found in the cytoplasm. The catalysed reaction is A + NH4(+) + H2O = hydroxylamine + AH2 + H(+). In terms of biological role, catalyzes the reduction of hydroxylamine to form NH(3) and H(2)O. The polypeptide is Hydroxylamine reductase (Aliivibrio fischeri (strain MJ11) (Vibrio fischeri)).